We begin with the raw amino-acid sequence, 481 residues long: Alginate biosynthesis protein AlgA (481 aa).

Belongs to the mannose-6-phosphate isomerase type 2 family. In terms of assembly, monomer. Requires Co(2+) as cofactor.

The catalysed reaction is D-mannose 6-phosphate = D-fructose 6-phosphate. It carries out the reaction alpha-D-mannose 1-phosphate + GTP + H(+) = GDP-alpha-D-mannose + diphosphate. The protein operates within nucleotide-sugar biosynthesis; GDP-alpha-D-mannose biosynthesis; GDP-alpha-D-mannose from alpha-D-mannose 1-phosphate (GTP route): step 1/1. It participates in nucleotide-sugar biosynthesis; GDP-alpha-D-mannose biosynthesis; alpha-D-mannose 1-phosphate from D-fructose 6-phosphate: step 1/2. In terms of biological role, produces a precursor for alginate polymerization. The alginate layer provides a protective barrier against host immune defenses and antibiotics. The sequence is that of Alginate biosynthesis protein AlgA (algA) from Pseudomonas aeruginosa (strain ATCC 15692 / DSM 22644 / CIP 104116 / JCM 14847 / LMG 12228 / 1C / PRS 101 / PAO1).